Consider the following 313-residue polypeptide: Porphobilinogen deaminase (313 aa).

Cys-241 is subject to S-(dipyrrolylmethanemethyl)cysteine.

Belongs to the HMBS family. Monomer. Dipyrromethane is required as a cofactor.

It catalyses the reaction 4 porphobilinogen + H2O = hydroxymethylbilane + 4 NH4(+). The protein operates within porphyrin-containing compound metabolism; protoporphyrin-IX biosynthesis; coproporphyrinogen-III from 5-aminolevulinate: step 2/4. Its pathway is porphyrin-containing compound metabolism; chlorophyll biosynthesis. Tetrapolymerization of the monopyrrole PBG into the hydroxymethylbilane pre-uroporphyrinogen in several discrete steps. The sequence is that of Porphobilinogen deaminase from Chlorobium chlorochromatii (strain CaD3).